The following is a 188-amino-acid chain: Elongation factor P (188 aa).

It belongs to the elongation factor P family.

It is found in the cytoplasm. It participates in protein biosynthesis; polypeptide chain elongation. Involved in peptide bond synthesis. Stimulates efficient translation and peptide-bond synthesis on native or reconstituted 70S ribosomes in vitro. Probably functions indirectly by altering the affinity of the ribosome for aminoacyl-tRNA, thus increasing their reactivity as acceptors for peptidyl transferase. This is Elongation factor P from Chlorobium limicola (strain DSM 245 / NBRC 103803 / 6330).